The chain runs to 416 residues: MAFIAALGLLMAGICPAVLCDGILGRDTLPHEDQGKGRQLHSLTLASINTDFTLSLYKKLALRNPDKNVVFSPLSISAALAILSLGAKDSTMEEILEVLKFNLTEITEEEIHQGFGHLLQRLSQPEDQAEINTGSALFIDKEQPILSEFQEKTRALYQAEAFVADFKQCNEAKKFINDYVSNQTQGKIAELFSELDERTSMVLVNYLLFKGKWKVPFNPNDTFESEFYLDEKRSVKVPMMKIKDLTTPYIRDEELSCSVLELKYTGNASALFILPDQGKMQQVESSLQPETLKKWKDSLRPRIISELRMPKFSISTDYNLEEVLPELGIRKIFSQQADLSRITGTKNLHVSQVVHKAVLDVDETGTEGAAATAVTAALKSLPQTIPLLNFNRPFMLVITDNNGQSVFFMGKVTNPM.

The signal sequence occupies residues methionine 1 to cysteine 20. N-linked (GlcNAc...) asparagine glycans are attached at residues asparagine 102, asparagine 182, asparagine 220, and asparagine 267. An RCL region spans residues glycine 365–arginine 392.

Belongs to the serpin family. Post-translationally, N-glycosylated. In terms of tissue distribution, liver and plasma.

It localises to the secreted. In terms of biological role, binds to and inhibits kallikreins. Inhibits trypsin but not chymotrypsin or elastase. The sequence is that of Serine protease inhibitor A3K (Serpina3k) from Rattus norvegicus (Rat).